The sequence spans 310 residues: uncharacterized protein (310 aa).

The interval 1-70 (MAGNSQRRGA…ARGRTDETET (70 aa)) is disordered. Over residues 49–62 (AAKRAKAQQRRPAR) the composition is skewed to basic residues. 3 residues coordinate S-adenosyl-L-methionine: glycine 262, valine 282, and leucine 291.

This sequence belongs to the class IV-like SAM-binding methyltransferase superfamily. RNA methyltransferase TrmH family.

This is an uncharacterized protein from Mycobacterium ulcerans (strain Agy99).